The sequence spans 349 residues: Heat-inducible transcription repressor HrcA (349 aa).

This sequence belongs to the HrcA family.

In terms of biological role, negative regulator of class I heat shock genes (grpE-dnaK-dnaJ and groELS operons). Prevents heat-shock induction of these operons. In Lactobacillus acidophilus (strain ATCC 700396 / NCK56 / N2 / NCFM), this protein is Heat-inducible transcription repressor HrcA.